The following is a 237-amino-acid chain: Ribonuclease PH (237 aa).

Phosphate is bound by residues Arg86 and 124-126; that span reads GTR.

Belongs to the RNase PH family. In terms of assembly, homohexameric ring arranged as a trimer of dimers.

The enzyme catalyses tRNA(n+1) + phosphate = tRNA(n) + a ribonucleoside 5'-diphosphate. Functionally, phosphorolytic 3'-5' exoribonuclease that plays an important role in tRNA 3'-end maturation. Removes nucleotide residues following the 3'-CCA terminus of tRNAs; can also add nucleotides to the ends of RNA molecules by using nucleoside diphosphates as substrates, but this may not be physiologically important. Probably plays a role in initiation of 16S rRNA degradation (leading to ribosome degradation) during starvation. This chain is Ribonuclease PH, found in Methylocella silvestris (strain DSM 15510 / CIP 108128 / LMG 27833 / NCIMB 13906 / BL2).